The following is an 89-amino-acid chain: Small ribosomal subunit protein uS17 (89 aa).

It belongs to the universal ribosomal protein uS17 family. Part of the 30S ribosomal subunit.

Its function is as follows. One of the primary rRNA binding proteins, it binds specifically to the 5'-end of 16S ribosomal RNA. The sequence is that of Small ribosomal subunit protein uS17 from Lactiplantibacillus plantarum (strain ATCC BAA-793 / NCIMB 8826 / WCFS1) (Lactobacillus plantarum).